The primary structure comprises 226 residues: MMQRKIKSYVLRAGRISNRQQQGLDLWLEDYELKFDSPTPWNFAKEFGRHDADTIVEIGFGMGTSLFAMAMNNPQCNYLGIEVHKAGVGSLVADLHEYQISNVRVVVHDAVEVLQTKIPENSLAGVQIFFPDPWHKKRHHKRRLIQSEFIQMLVKKIRPSGFIHCATDWEDYAEHILNVLSSESALFNQQKEGGYSPRPDSRPLTKFELRGERLGHGVWDLVFIKK.

S-adenosyl-L-methionine contacts are provided by Glu57, Glu82, Asp109, and Asp132. The active site involves Asp132. Residues Lys136, Asp168, and 205–208 contribute to the substrate site; that span reads TKFE.

This sequence belongs to the class I-like SAM-binding methyltransferase superfamily. TrmB family.

It carries out the reaction guanosine(46) in tRNA + S-adenosyl-L-methionine = N(7)-methylguanosine(46) in tRNA + S-adenosyl-L-homocysteine. It functions in the pathway tRNA modification; N(7)-methylguanine-tRNA biosynthesis. Its function is as follows. Catalyzes the formation of N(7)-methylguanine at position 46 (m7G46) in tRNA. This Legionella pneumophila subsp. pneumophila (strain Philadelphia 1 / ATCC 33152 / DSM 7513) protein is tRNA (guanine-N(7)-)-methyltransferase.